The chain runs to 443 residues: Phosphoglucosamine mutase (443 aa).

The active-site Phosphoserine intermediate is serine 101. Mg(2+) is bound by residues serine 101, aspartate 239, aspartate 241, and aspartate 243. Phosphoserine is present on serine 101.

This sequence belongs to the phosphohexose mutase family. Mg(2+) is required as a cofactor. In terms of processing, activated by phosphorylation.

It catalyses the reaction alpha-D-glucosamine 1-phosphate = D-glucosamine 6-phosphate. Its function is as follows. Catalyzes the conversion of glucosamine-6-phosphate to glucosamine-1-phosphate. This is Phosphoglucosamine mutase from Francisella tularensis subsp. tularensis (strain WY96-3418).